Here is a 472-residue protein sequence, read N- to C-terminus: Na(+)/H(+) antiporter NhaA 1 (472 aa).

The next 11 helical transmembrane spans lie at 34 to 54 (TASI…NSQW), 86 to 106 (GLMV…CLVG), 116 to 136 (LVIA…AGVA), 146 to 166 (GWGI…ALLG), 175 to 195 (VTLS…IGLF), 203 to 223 (TSLM…VLGF), 227 to 247 (IFYL…GVHA), 324 to 344 (PVSL…ALPD), 353 to 373 (VVFI…ISVF), 394 to 414 (VFAL…IASL), and 428 to 448 (LGIL…FLMI).

Belongs to the NhaA Na(+)/H(+) (TC 2.A.33) antiporter family.

Its subcellular location is the cell inner membrane. The enzyme catalyses Na(+)(in) + 2 H(+)(out) = Na(+)(out) + 2 H(+)(in). Its function is as follows. Na(+)/H(+) antiporter that extrudes sodium in exchange for external protons. The chain is Na(+)/H(+) antiporter NhaA 1 from Pseudoalteromonas atlantica (strain T6c / ATCC BAA-1087).